The chain runs to 491 residues: G2/mitotic-specific cyclin-A (491 aa).

Residues 1–21 are disordered; the sequence is MASFQIHQDMSNKENPGIKIP. The Cyclin N-terminal domain maps to 206–332; the sequence is DILEYFRESE…ILKILSFDLC (127 aa).

This sequence belongs to the cyclin family. Cyclin AB subfamily. Component of the Frs-CycA-Cdk1 complex composed of CycA, Cdk1 and Z600. Interacts (via C-terminus) with Z600. Interacts with otu and (via C-terminus) with bam; the interaction stabilizes CycA by negatively regulating its ubiquitination. Post-translationally, ubiquitinated. Ubiquitination state is negatively regulated by a deubiquitinase complex made up of bam and otu.

Its function is as follows. Essential for the control of the cell cycle at the G2/M (mitosis) transition. Interacts with the Cdk1 and Cdk2 protein kinases to form MPF. G2/M cyclins accumulate steadily during G2 and are abruptly destroyed at mitosis. In Drosophila melanogaster (Fruit fly), this protein is G2/mitotic-specific cyclin-A (CycA).